The chain runs to 253 residues: Mediator of RNA polymerase II transcription subunit 19 (253 aa).

2 disordered regions span residues 18–49 (EQYS…TLKT) and 157–253 (GPLP…TQVF). Low complexity predominate over residues 21-40 (SPKSSPRAGGAGGRSPVVAR). Basic residues-rich tracts occupy residues 165 to 183 (HLKS…KHKY) and 220 to 233 (RKKR…KKQR).

It belongs to the Mediator complex subunit 19 family. Component of the Mediator complex.

It localises to the nucleus. Its function is as follows. Component of the Mediator complex, a coactivator involved in the regulated transcription of nearly all RNA polymerase II-dependent genes. Mediator functions as a bridge to convey information from gene-specific regulatory proteins to the basal RNA polymerase II transcription machinery. Mediator is recruited to promoters by direct interactions with regulatory proteins and serves as a scaffold for the assembly of a functional preinitiation complex with RNA polymerase II and the general transcription factors. The sequence is that of Mediator of RNA polymerase II transcription subunit 19 (MED19) from Aedes aegypti (Yellowfever mosquito).